A 347-amino-acid chain; its full sequence is Glycerol-1-phosphate dehydrogenase [NAD(P)+] (347 aa).

NAD(+) contacts are provided by residues 90–94 and 112–115; these read GRPVD and TAIS. D117 is a substrate binding site. S121 contacts NAD(+). D165 contacts substrate. D165 and H245 together coordinate Zn(2+). H249 serves as a coordination point for substrate. H262 is a binding site for Zn(2+).

Belongs to the glycerol-1-phosphate dehydrogenase family. As to quaternary structure, homodimer. It depends on Zn(2+) as a cofactor.

Its subcellular location is the cytoplasm. It carries out the reaction sn-glycerol 1-phosphate + NAD(+) = dihydroxyacetone phosphate + NADH + H(+). It catalyses the reaction sn-glycerol 1-phosphate + NADP(+) = dihydroxyacetone phosphate + NADPH + H(+). It functions in the pathway membrane lipid metabolism; glycerophospholipid metabolism. Its function is as follows. Catalyzes the NAD(P)H-dependent reduction of dihydroxyacetonephosphate (DHAP or glycerone phosphate) to glycerol 1-phosphate (G1P). The G1P thus generated is used as the glycerophosphate backbone of phospholipids in the cellular membranes of Archaea. This chain is Glycerol-1-phosphate dehydrogenase [NAD(P)+], found in Thermofilum pendens (strain DSM 2475 / Hrk 5).